The chain runs to 200 residues: Dephospho-CoA kinase (200 aa).

The 198-residue stretch at 3–200 (IFGLTGGIGS…LNVNNKCNMD (198 aa)) folds into the DPCK domain. 11–16 (GSGKSL) serves as a coordination point for ATP.

The protein belongs to the CoaE family.

Its subcellular location is the cytoplasm. The enzyme catalyses 3'-dephospho-CoA + ATP = ADP + CoA + H(+). It participates in cofactor biosynthesis; coenzyme A biosynthesis; CoA from (R)-pantothenate: step 5/5. Catalyzes the phosphorylation of the 3'-hydroxyl group of dephosphocoenzyme A to form coenzyme A. This is Dephospho-CoA kinase from Ehrlichia canis (strain Jake).